Here is a 1483-residue protein sequence, read N- to C-terminus: Vacuolar protein sorting/targeting protein 10 (1483 aa).

The signal sequence occupies residues 1 to 23 (MIVRSLLLAGSLLLASVVPAAHA). Residues 24–1347 (KSDGPEIKVK…KKKEFEKKHP (1324 aa)) are Lumenal-facing. Asn-295 is a glycosylation site (N-linked (GlcNAc...) asparagine). BNR repeat units follow at residues 376–385 (ISFDDGRTFK), 436–446 (YVSNDAGVTWR), 482–492 (YSLNHGKDWKK), and 716–726 (FVTRDHGKTWQ). 2 N-linked (GlcNAc...) asparagine glycosylation sites follow: Asn-898 and Asn-963. BNR repeat units lie at residues 1098–1108 (FMSRDAGITWH) and 1140–1149 (YSLDEGETWT). Residues 1348-1368 (GIGGFGIFLAIFFPVTAATAI) traverse the membrane as a helical segment. Over 1369–1399 (GYWAFSKWDGKFGRIRLGESQPESLFAGNSP) the chain is Cytoplasmic. Residues 1400 to 1420 (LITIPVAIVAGTVAVITALPL) form a helical membrane-spanning segment. The Lumenal portion of the chain corresponds to 1421–1483 (LFSSLWRSFK…EFEGDDDEEV (63 aa)).

Belongs to the VPS10-related sortilin family.

It localises to the golgi apparatus. The protein localises to the trans-Golgi network membrane. Its subcellular location is the prevacuolar compartment membrane. Its function is as follows. Functions as a sorting receptor in the Golgi compartment required for the intracellular sorting and delivery of soluble vacuolar proteins, like carboxypeptidase Y (CPY) and proteinase A. Executes multiple rounds of sorting by cycling between the late Golgi and a prevacuolar endosome-like compartment. The protein is Vacuolar protein sorting/targeting protein 10 (VPS10) of Arthroderma gypseum (strain ATCC MYA-4604 / CBS 118893) (Microsporum gypseum).